A 450-amino-acid polypeptide reads, in one-letter code: Keratin, type I cytoskeletal 25 (450 aa).

The interval 1–25 (MSLRLPSGSRRASPRPTTGSLRLSS) is disordered. Positions 1–78 (MSLRLPSGSR…VNEGGLLSGN (78 aa)) are head. The segment at 79–114 (EKVTMQNLNDRLASYLENVRALEEANADLEQKIKGW) is coil 1A. Positions 79 to 394 (EKVTMQNLND…LLIGGDDGAC (316 aa)) constitute an IF rod domain. Residues 115 to 136 (YEKFGPGSCRGLDHDYSRYFPI) form a linker 1 region. The coil 1B stretch occupies residues 137–228 (IEDLKNQIIA…KNHKEEMQVL (92 aa)). The interval 229 to 251 (QCAAGGNVNVEMNAAPGVDLTVL) is linker 12. The interval 252-390 (LNNMRAEYEA…ETYCLLIGGD (139 aa)) is coil 2. A tail region spans residues 391–450 (DGACKSGGYKSKDYGAGNVGNQMKDPVKAIVVKKVLEEVDQRSKILTPRLHSLEEKSQSN). Ser-442 bears the Phosphoserine mark.

Belongs to the intermediate filament family. As to quaternary structure, heterodimer of a type I and a type II keratin. Heterodimer with type II keratin KRT5 leading to the formation of keratin intermediate filament (KIF) network. Interacts with KRT6A to form filaments.

Its subcellular location is the cytoplasm. Its function is as follows. Essential for the proper assembly of type I and type II keratin protein complexes and formation of keratin intermediate filaments in the inner root sheath (irs). Plays a role in the cytoskeleton organization. This chain is Keratin, type I cytoskeletal 25, found in Bos taurus (Bovine).